The chain runs to 514 residues: MGCDGRVSGLLRRNLQPTLTYWSVFFSFGLCIAFLGPTLLDLRCQTHSSLPQISWVFFSQQLCLLLGSALGGVFKRTLAQSLWALFTSSLAISLVFAVIPFCRDVKVLASVMALAGLAMGCIDTVANMQLVRMYQKDSAVFLQVLHFFVGFGALLSPLIADPFLSEANCLPANSTANTTSRGHLFHVSRVLGQHHVDAKPWSNQTFPGLTPKDGAGTRVSYAFWIMALINLPVPMAVLMLLSKERLLTCCPQRRPLLLSADELALETQPPEKEDASSLPPKFQSHLGHEDLFSCCQRKNLRGAPYSFFAIHITGALVLFMTDGLTGAYSAFVYSYAVEKPLSVGHKVAGYLPSLFWGFITLGRLLSIPISSRMKPATMVFINVVGVVVTFLVLLIFSYNVVFLFVGTASLGLFLSSTFPSMLAYTEDSLQYKGCATTVLVTGAGVGEMVLQMLVGSIFQAQGSYSFLVCGVIFGCLAFTFYILLLFFHRMHPGLPSVPTQDRSIGMENSECYQR.

A run of 5 helical transmembrane segments spans residues Leu19–Leu39, Ile53–Val73, Leu82–Cys102, Val107–Asn127, and Ala139–Ile159. N-linked (GlcNAc...) asparagine glycosylation is present at Asn177. 7 helical membrane passes run Tyr221–Leu241, Phe307–Ala327, Val347–Ile367, Ala376–Phe396, Val400–Ser420, Val438–Phe458, and Phe466–Phe486.

Belongs to the major facilitator superfamily.

It is found in the membrane. This chain is Major facilitator superfamily domain-containing protein 4A, found in Homo sapiens (Human).